The chain runs to 305 residues: MLGLPERRLPSAEFLLLLPFLLLLLLLLPAAPAPHRAAYKPVIVVHGLFDSSYSFRHLLEYINETHPGTAVTVLDLFDGRESLRPLWEQVQGFREAVAPIMAKALQGVHLICYSQGGLVCRALLSVMDEHNVDSFISLSSPQMGQYGDTNYLKWLFPTSMRSNLYRICYSPWGQEFSICNYWHDPHHDDLYLNASSFLALINGERDHPNATAWRKNFLRLGRLVLIGGPDDGVITPWQSSFFGFYDANETVLEMEKQLVYLRDSFGLKTLLARGAIVRCPMAGISHTAWHSNRTLYETCIEPWLS.

A signal peptide spans 1 to 32; that stretch reads MLGLPERRLPSAEFLLLLPFLLLLLLLLPAAP. 2 disulfide bridges follow: cysteine 112–cysteine 120 and cysteine 168–cysteine 179. Serine 114 acts as the Nucleophile in catalysis. Asparagine 193 carries an N-linked (GlcNAc...) asparagine glycan. Residues aspartate 231 and histidine 286 contribute to the active site. Cysteine 279 and cysteine 299 are joined by a disulfide.

It belongs to the palmitoyl-protein thioesterase family.

It localises to the lysosome. It catalyses the reaction hexadecanoyl-CoA + H2O = hexadecanoate + CoA + H(+). It carries out the reaction S-hexadecanoyl-N-acetylcysteamine + H2O = N-acetylcysteamine + hexadecanoate + H(+). Functionally, catalyzes the cleavage of thioester bonds from S-palmitoyl-CoA or S-palmitoyl-N-acetylcysteamine (unbranched structures) but does not have activity against palmitoylcysteine or palmitoylated proteins, branched structures or bulky head groups. Conversely, hydrolyzes both long and short chain fatty acyl-CoA substrate. This chain is Lysosomal thioesterase PPT2 (PPT2), found in Bos taurus (Bovine).